Consider the following 195-residue polypeptide: Probable molybdenum cofactor guanylyltransferase (195 aa).

Residues 8-10 (LSG), lysine 20, aspartate 65, and aspartate 96 contribute to the GTP site. Residue aspartate 96 participates in Mg(2+) binding.

The protein belongs to the MobA family. The cofactor is Mg(2+).

The protein localises to the cytoplasm. The catalysed reaction is Mo-molybdopterin + GTP + H(+) = Mo-molybdopterin guanine dinucleotide + diphosphate. Its function is as follows. Transfers a GMP moiety from GTP to Mo-molybdopterin (Mo-MPT) cofactor (Moco or molybdenum cofactor) to form Mo-molybdopterin guanine dinucleotide (Mo-MGD) cofactor. This Bacillus licheniformis (strain ATCC 14580 / DSM 13 / JCM 2505 / CCUG 7422 / NBRC 12200 / NCIMB 9375 / NCTC 10341 / NRRL NRS-1264 / Gibson 46) protein is Probable molybdenum cofactor guanylyltransferase.